Consider the following 26-residue polypeptide: uncharacterized protein (26 aa).

This is an uncharacterized protein from Archaeoglobus fulgidus (strain ATCC 49558 / DSM 4304 / JCM 9628 / NBRC 100126 / VC-16).